Reading from the N-terminus, the 918-residue chain is UPF0182 protein CPF_0011 (918 aa).

The next 7 helical transmembrane spans lie at 8–28 (TVLI…NFII), 46–66 (LIAI…VIAI), 91–111 (FLLS…TTQW), 151–171 (AISL…ALGF), 200–220 (LAVL…LKSY), 243–263 (IFYK…FISI), and 271–291 (IIIS…VAIF). A compositionally biased stretch (basic and acidic residues) spans 857-869 (EENKNSNKDETPK). Residues 857–876 (EENKNSNKDETPKNEITSDN) are disordered.

Belongs to the UPF0182 family.

The protein resides in the cell membrane. The polypeptide is UPF0182 protein CPF_0011 (Clostridium perfringens (strain ATCC 13124 / DSM 756 / JCM 1290 / NCIMB 6125 / NCTC 8237 / Type A)).